Here is an 85-residue protein sequence, read N- to C-terminus: Exodeoxyribonuclease 7 small subunit (85 aa).

The disordered stretch occupies residues 66 to 85; it reads SGEGEEVPLDTPDAEDGDGE. The segment covering 68–85 has biased composition (acidic residues); that stretch reads EGEEVPLDTPDAEDGDGE.

This sequence belongs to the XseB family. Heterooligomer composed of large and small subunits.

The protein resides in the cytoplasm. It catalyses the reaction Exonucleolytic cleavage in either 5'- to 3'- or 3'- to 5'-direction to yield nucleoside 5'-phosphates.. Bidirectionally degrades single-stranded DNA into large acid-insoluble oligonucleotides, which are then degraded further into small acid-soluble oligonucleotides. This chain is Exodeoxyribonuclease 7 small subunit, found in Thioalkalivibrio sulfidiphilus (strain HL-EbGR7).